We begin with the raw amino-acid sequence, 40 residues long: GCIPKHKRCTWSGPKCCNNISCHCNISGTLCKCRPGLFGW.

4 cysteine pairs are disulfide-bonded: Cys2-Cys17, Cys9-Cys22, Cys16-Cys33, and Cys24-Cys31. Tryptophan amide is present on Trp40.

In terms of processing, contains 4 disulfide bonds. Expressed by the venom gland.

The protein resides in the secreted. The protein is Toxin CSTX-17 of Cupiennius salei (American wandering spider).